The following is a 224-amino-acid chain: ATP-dependent dethiobiotin synthetase BioD (224 aa).

14-19 contributes to the ATP binding site; that stretch reads GIGKTV. A Mg(2+)-binding site is contributed by Thr18. Lys39 is a catalytic residue. Ser43 is a binding site for substrate. ATP contacts are provided by residues Asp56, 117-120, and 177-178; these read EGVG and NE. Asp56 and Glu117 together coordinate Mg(2+).

It belongs to the dethiobiotin synthetase family. In terms of assembly, homodimer. Mg(2+) serves as cofactor.

The protein resides in the cytoplasm. It catalyses the reaction (7R,8S)-7,8-diammoniononanoate + CO2 + ATP = (4R,5S)-dethiobiotin + ADP + phosphate + 3 H(+). The protein operates within cofactor biosynthesis; biotin biosynthesis; biotin from 7,8-diaminononanoate: step 1/2. Functionally, catalyzes a mechanistically unusual reaction, the ATP-dependent insertion of CO2 between the N7 and N8 nitrogen atoms of 7,8-diaminopelargonic acid (DAPA, also called 7,8-diammoniononanoate) to form a ureido ring. The chain is ATP-dependent dethiobiotin synthetase BioD from Xanthomonas campestris pv. campestris (strain 8004).